The sequence spans 400 residues: Iron(III) enterobactin esterase (400 aa).

This sequence belongs to the Fes family. In terms of assembly, monomer.

It is found in the cytoplasm. The enzyme catalyses Fe(III)-enterobactin + 3 H2O + H(+) = Fe(III)-[N-(2,3-dihydroxybenzoyl)-L-serine] + 2 N-(2,3-dihydroxybenzoyl)-L-serine. The catalysed reaction is Fe(III)-enterobactin + H2O = Fe(III)-[N-(2,3-dihydroxybenzoyl)-L-serine]3 + H(+). It carries out the reaction Fe(III)-[N-(2,3-dihydroxybenzoyl)-L-serine]3 + H2O + H(+) = Fe(III)-[N-(2,3-dihydroxybenzoyl)-L-serine]2 + N-(2,3-dihydroxybenzoyl)-L-serine. It catalyses the reaction Fe(III)-[N-(2,3-dihydroxybenzoyl)-L-serine]2 + H2O + H(+) = Fe(III)-[N-(2,3-dihydroxybenzoyl)-L-serine] + N-(2,3-dihydroxybenzoyl)-L-serine. The enzyme catalyses enterobactin + 3 H2O = 3 N-(2,3-dihydroxybenzoyl)-L-serine + 2 H(+). Its activity is regulated as follows. Inhibited by N-ethylmaleimide. Its function is as follows. Catalyzes the hydrolysis of ferric enterobactin (Fe-Ent). Is responsible for the release of iron from ferric enterobactin. Also catalyzes the hydrolysis of iron-free enterobactin (Ent). Cleavage of ferric enterobactin results in a mixture of three hydrolysis products, 2,3-dihydroxybenzoylserine (DHBS), the linear dimer (DHBS)2 and the linear trimer (DHBS)3, while cleavage of iron-free enterobactin yields only the monomer. Hydrolysis of ferric enterobactin is less efficient than hydrolysis of unliganded enterobactin. It also cleaves the aluminum (III) complex at a rate similar to the ferric complex. The sequence is that of Iron(III) enterobactin esterase from Escherichia coli (strain K12).